The following is a 114-amino-acid chain: Non-specific lipid-transfer protein 1 (114 aa).

The N-terminal stretch at methionine 1–glutamate 23 is a signal peptide. 4 disulfides stabilise this stretch: cysteine 27/cysteine 73, cysteine 37/cysteine 50, cysteine 51/cysteine 96, and cysteine 71/cysteine 110.

This sequence belongs to the plant LTP family.

Functionally, plant non-specific lipid-transfer proteins transfer phospholipids as well as galactolipids across membranes. May play a role in wax or cutin deposition in the cell walls of expanding epidermal cells and certain secretory tissues. In Solanum lycopersicum (Tomato), this protein is Non-specific lipid-transfer protein 1 (TSW12).